Consider the following 256-residue polypeptide: Small ribosomal subunit protein eS1 (256 aa).

An N-acetylalanine; partial modification is found at Ala-2.

Belongs to the eukaryotic ribosomal protein eS1 family. Component of the small ribosomal subunit. Mature ribosomes consist of a small (40S) and a large (60S) subunit. The 40S subunit contains about 33 different proteins and 1 molecule of RNA (18S). The 60S subunit contains about 49 different proteins and 3 molecules of RNA (25S, 5.8S and 5S).

It is found in the cytoplasm. This is Small ribosomal subunit protein eS1 from Lentinula edodes (Shiitake mushroom).